Consider the following 330-residue polypeptide: Alpha-1,6-glucosyltransferase (330 aa).

It belongs to the glycosyltransferase group 1 family. The cofactor is Does not require a metal cofactor..

Its subcellular location is the cytoplasm. The protein operates within protein modification; protein glycosylation. Catalyzes the transfer of a glucose moiety from UDP-glucose to another glucose that is N-linked to an asparagine within a peptide or protein. Can act in a repetitive manner, and this way it elongates the N-linked glucose by a glycan chain consisting of several alpha-1-&gt;6 linked glucose residues. Is able to add up to six glucose units in vitro. Cannot use UDP-Gal, UDP-GlcNAc or UDP-GalNAc as a substrate donor. This chain is Alpha-1,6-glucosyltransferase, found in Actinobacillus pleuropneumoniae serotype 7 (strain AP76).